The primary structure comprises 279 residues: Large ribosomal subunit protein uL2 (279 aa).

Positions 223-279 are disordered; that stretch reads VVMNPVDHPHGGGEGRTSGGRHPVSPWGQPTKGYKTRRSARPSDKFIVQKRKRNRNR. Residues 270 to 279 are compositionally biased toward basic residues; that stretch reads VQKRKRNRNR.

Belongs to the universal ribosomal protein uL2 family. In terms of assembly, part of the 50S ribosomal subunit. Forms a bridge to the 30S subunit in the 70S ribosome.

Functionally, one of the primary rRNA binding proteins. Required for association of the 30S and 50S subunits to form the 70S ribosome, for tRNA binding and peptide bond formation. It has been suggested to have peptidyltransferase activity; this is somewhat controversial. Makes several contacts with the 16S rRNA in the 70S ribosome. This Leptospira borgpetersenii serovar Hardjo-bovis (strain JB197) protein is Large ribosomal subunit protein uL2.